Consider the following 1515-residue polypeptide: Lysophospholipase nte1 (1515 aa).

Residues 1–59 (MESLSNLGNAMSSVLSETTSTTATAILADPTEALSSVVALASDAVSKATSDVVPEHTPT) lie on the Cytoplasmic side of the membrane. A helical transmembrane segment spans residues 60-80 (SWFTIILWLLHRISSVLYFVI). Topologically, residues 81–102 (KLTTITTPTFLFNIFSTSLTVT) are lumenal. A helical membrane pass occupies residues 103 to 123 (MNATTLVLIMLFMMAGVTWVV). Residues 124–1515 (RYRYLNMYSR…RTMAPRRASI (1392 aa)) are Cytoplasmic-facing. Disordered stretches follow at residues 278–303 (MHDTDDDDSPDPTPSAPGTAMPGYPM), 519–580 (VTAT…TPRN), and 617–639 (VNPDSTQASPRFVPTDQRRSRGG). 2 stretches are compositionally biased toward polar residues: residues 543-554 (LTNTQQLKSGPA) and 566-579 (PRPQRNLSPFSTPR). Residues 670-789 (SPVP…LAGY) and 835-955 (RLTE…IAAR) each bind a nucleoside 3',5'-cyclic phosphate. A PNPLA domain is found at 1212 to 1376 (LVLGGGGARG…IDNLTVSRMK (165 aa)). The short motif at 1216-1221 (GGGARG) is the GXGXXG element. Residues 1243–1247 (GTSIG) carry the GXSXG motif. Serine 1245 functions as the Nucleophile in the catalytic mechanism. Residue aspartate 1363 is the Proton acceptor of the active site. The short motif at 1363–1365 (DGG) is the DGA/G element.

This sequence belongs to the NTE family.

The protein resides in the endoplasmic reticulum membrane. It carries out the reaction a 1-acyl-sn-glycero-3-phosphocholine + H2O = sn-glycerol 3-phosphocholine + a fatty acid + H(+). With respect to regulation, inhibited by organophosphorus esters. Intracellular phospholipase B that catalyzes the double deacylation of phosphatidylcholine (PC) to glycerophosphocholine (GroPCho). Plays an important role in membrane lipid homeostasis. Responsible for the rapid PC turnover in response to inositol, elevated temperatures, or when choline is present in the growth medium. The protein is Lysophospholipase nte1 (nte1) of Neurospora crassa (strain ATCC 24698 / 74-OR23-1A / CBS 708.71 / DSM 1257 / FGSC 987).